The sequence spans 361 residues: uncharacterized protein (361 aa).

WD repeat units follow at residues arginine 57–lysine 96, lysine 103–histidine 142, aspartate 146–leucine 184, glutamate 187–aspartate 229, serine 237–isoleucine 275, and serine 280–serine 318. The segment at aspartate 311–leucine 361 is disordered.

The protein resides in the nucleus. It is found in the nucleolus. This is an uncharacterized protein from Schizosaccharomyces pombe (strain 972 / ATCC 24843) (Fission yeast).